The primary structure comprises 447 residues: N-succinylarginine dihydrolase (447 aa).

Residues 19 to 28 (AGLSFGNEAS), asparagine 110, and 137 to 138 (HR) each bind substrate. The active site involves glutamate 174. Arginine 214 provides a ligand contact to substrate. Residue histidine 250 is part of the active site. Aspartate 252 and asparagine 365 together coordinate substrate. Residue cysteine 371 is the Nucleophile of the active site.

This sequence belongs to the succinylarginine dihydrolase family. In terms of assembly, homodimer.

The enzyme catalyses N(2)-succinyl-L-arginine + 2 H2O + 2 H(+) = N(2)-succinyl-L-ornithine + 2 NH4(+) + CO2. It functions in the pathway amino-acid degradation; L-arginine degradation via AST pathway; L-glutamate and succinate from L-arginine: step 2/5. Functionally, catalyzes the hydrolysis of N(2)-succinylarginine into N(2)-succinylornithine, ammonia and CO(2). In Acinetobacter baumannii (strain ATCC 17978 / DSM 105126 / CIP 53.77 / LMG 1025 / NCDC KC755 / 5377), this protein is N-succinylarginine dihydrolase.